A 151-amino-acid chain; its full sequence is Endoribonuclease YbeY (151 aa).

His-117, His-121, and His-127 together coordinate Zn(2+).

The protein belongs to the endoribonuclease YbeY family. The cofactor is Zn(2+).

The protein resides in the cytoplasm. Functionally, single strand-specific metallo-endoribonuclease involved in late-stage 70S ribosome quality control and in maturation of the 3' terminus of the 16S rRNA. This is Endoribonuclease YbeY from Alkaliphilus oremlandii (strain OhILAs) (Clostridium oremlandii (strain OhILAs)).